The following is a 426-amino-acid chain: Histidine--tRNA ligase (426 aa).

The protein belongs to the class-II aminoacyl-tRNA synthetase family.

The protein localises to the cytoplasm. It carries out the reaction tRNA(His) + L-histidine + ATP = L-histidyl-tRNA(His) + AMP + diphosphate + H(+). The protein is Histidine--tRNA ligase of Saccharolobus islandicus (strain L.S.2.15 / Lassen #1) (Sulfolobus islandicus).